The primary structure comprises 180 residues: Putative pre-16S rRNA nuclease (180 aa).

Residues methionine 1–proline 12 show a composition bias toward basic and acidic residues. Positions methionine 1–glycine 23 are disordered.

It belongs to the YqgF nuclease family.

It is found in the cytoplasm. Functionally, could be a nuclease involved in processing of the 5'-end of pre-16S rRNA. The polypeptide is Putative pre-16S rRNA nuclease (Nocardia farcinica (strain IFM 10152)).